The sequence spans 75 residues: MLIPHHLLEAETLTRLIEDFVTREGTDNGEETPLESRVLRVRQALERGEALILFEPDSQQCQLVAKRDVPKEWLD.

This sequence belongs to the UPF0270 family.

The protein is UPF0270 protein Avin_35000 of Azotobacter vinelandii (strain DJ / ATCC BAA-1303).